The primary structure comprises 221 residues: Probable septum site-determining protein MinC (221 aa).

Belongs to the MinC family. As to quaternary structure, interacts with MinD and FtsZ.

Cell division inhibitor that blocks the formation of polar Z ring septums. Rapidly oscillates between the poles of the cell to destabilize FtsZ filaments that have formed before they mature into polar Z rings. Prevents FtsZ polymerization. The chain is Probable septum site-determining protein MinC from Aliivibrio salmonicida (strain LFI1238) (Vibrio salmonicida (strain LFI1238)).